A 177-amino-acid polypeptide reads, in one-letter code: MELSSRKPYFIEEEEEENLASSLSEMEAGFSGNNNNSNNHGNPQNGVVSSSRFSYGRLNSLRNSQSYYYNQYSVSSPRSVVSGRFHDFRFDIQQPHFLDSCFLCKKPLGDNRDIYMYRGDTPFCSEECRQEQIERDEAKEKKQNLSHSVKSAMRRKEQSSPTRSRDYAFHNGTVAAA.

The segment covering 22–46 has biased composition (low complexity); that stretch reads SLSEMEAGFSGNNNNSNNHGNPQNG. Disordered regions lie at residues 22–49 and 134–177; these read SLSE…GVVS and ERDE…VAAA. An FLZ-type zinc finger spans residues 96–140; that stretch reads HFLDSCFLCKKPLGDNRDIYMYRGDTPFCSEECRQEQIERDEAKE. 2 stretches are compositionally biased toward basic and acidic residues: residues 134-143 and 154-168; these read ERDEAKEKKQ and RRKE…RDYA.

The protein belongs to the FLZ family. As to quaternary structure, interacts with KIN10 and KIN11 via its FLZ-type zinc finger domain. Interacts with KINB1, KINB2 and KINB3 via its N-terminal part. Interacts with DSP3 and BBX21 via its FLZ-type zinc finger domain. Forms heterodimer with FLZ7 and FLZ15 in vitro.

The protein localises to the nucleus. The protein resides in the cytoplasm. Functionally, may act as an adapter to facilitate the interaction of SnRK1 complex with effector proteins, conferring tissue- and stimulus-type specific differences in the SnRK1 regulation pathway. This chain is FCS-Like Zinc finger 1, found in Arabidopsis thaliana (Mouse-ear cress).